Consider the following 924-residue polypeptide: Protein SMAX1-LIKE 2 (924 aa).

Residues 8–181 (IQQTLTPEAA…SAIEQSLIGN (174 aa)) enclose the Clp R domain. The repeat 1 stretch occupies residues 12 to 83 (LTPEAATVLN…LCFSVALERL (72 aa)). Over residues 86-105 (TSTTTTTTSSSSSSSPSQTQ) the composition is skewed to low complexity. The tract at residues 86–107 (TSTTTTTTSSSSSSSPSQTQEP) is disordered. The segment at 109–181 (LSNALTAALK…SAIEQSLIGN (73 aa)) is repeat 2. Positions 522 to 552 (TRSDITPPGSPVGTDLVLGRPNRGLSSPEKK) are disordered. The EAR signature appears at 780–784 (FDLNE).

The protein belongs to the ClpA/ClpB family. Interacts probably with TPL/TPR in an EAR-motif dependent manner. As to expression, expressed in seedlings and leaves. Detected in roots and axillary branches.

In terms of biological role, probable component of a transcriptional corepressor complex that acts specifically in the karrikin pathway. Controls seedling growth redundantly with SMAX1, but is not involved in leaf morphology, shoot branching or germination control. The sequence is that of Protein SMAX1-LIKE 2 from Arabidopsis thaliana (Mouse-ear cress).